A 173-amino-acid chain; its full sequence is Beta-defensin 129 (173 aa).

A signal peptide spans 1–19; the sequence is MKLLFPIFASLMLQYKVNT. Cystine bridges form between cysteine 27/cysteine 53, cysteine 34/cysteine 48, and cysteine 38/cysteine 54. Positions 144–173 are disordered; that stretch reads STKSNIKESRDSATASPPPAPPPPNTLPTP. The span at 159–173 shows a compositional bias: pro residues; that stretch reads SPPPAPPPPNTLPTP.

The protein belongs to the beta-defensin family.

It localises to the secreted. Its function is as follows. Has antibacterial activity. The polypeptide is Beta-defensin 129 (DEFB129) (Hylobates lar (Lar gibbon)).